Consider the following 344-residue polypeptide: tRNA N6-adenosine threonylcarbamoyltransferase (344 aa).

Residues H114 and H118 each coordinate Fe cation. Substrate-binding positions include 136–140 (LVSGG), D170, G183, D187, and N278. A Fe cation-binding site is contributed by D306. The interval 325-344 (PSPLDVPSDPGLPVMQGQVR) is disordered.

The protein belongs to the KAE1 / TsaD family. Fe(2+) is required as a cofactor.

The protein resides in the cytoplasm. The enzyme catalyses L-threonylcarbamoyladenylate + adenosine(37) in tRNA = N(6)-L-threonylcarbamoyladenosine(37) in tRNA + AMP + H(+). Required for the formation of a threonylcarbamoyl group on adenosine at position 37 (t(6)A37) in tRNAs that read codons beginning with adenine. Is involved in the transfer of the threonylcarbamoyl moiety of threonylcarbamoyl-AMP (TC-AMP) to the N6 group of A37, together with TsaE and TsaB. TsaD likely plays a direct catalytic role in this reaction. The polypeptide is tRNA N6-adenosine threonylcarbamoyltransferase (Mycobacterium tuberculosis (strain ATCC 25177 / H37Ra)).